Here is a 195-residue protein sequence, read N- to C-terminus: Myelin-associated neurite-outgrowth inhibitor (195 aa).

Methionine 1 carries the post-translational modification N-acetylmethionine. Topologically, residues 1-18 are cytoplasmic; it reads MNPVYSPGSSGVPYANAK. Serine 6 bears the Phosphoserine mark. A helical transmembrane segment spans residues 19–42; the sequence is GIGYPAGFPMGYAAAAPAYSPNMY. The Extracellular segment spans residues 43–142; sequence PGANPTFQTG…PAPIPPPRGN (100 aa). Asparagine 46 is a glycosylation site (N-linked (GlcNAc...) asparagine). Residues 143-164 form a helical membrane-spanning segment; the sequence is GVTMGMVAGTTMAMSAGTLLTA. The Cytoplasmic portion of the chain corresponds to 165–195; it reads HSPTPVAPHPVTVPTYRAPGTPTYSYVPPQW.

The protein belongs to the FAM168 family. As to quaternary structure, may form homodimers. May interact with DAZAP2, FAM168A, PRDX6, RBM6, TMTC1 and YPEL2. Interacts with CDC27. Post-translationally, N-glycosylated. Expressed in the brain, within neuronal axonal fibers and associated with myelin sheets (at protein level). Expression tends to be lower in the brain of Alzheimer disease patients compared to healthy individuals (at protein level).

It localises to the cytoplasm. The protein resides in the perinuclear region. The protein localises to the cell membrane. It is found in the cell projection. Its subcellular location is the axon. In terms of biological role, inhibitor of neuronal axonal outgrowth. Acts as a negative regulator of CDC42 and STAT3 and a positive regulator of STMN2. Positive regulator of CDC27. This is Myelin-associated neurite-outgrowth inhibitor (FAM168B) from Homo sapiens (Human).